Here is a 150-residue protein sequence, read N- to C-terminus: Deoxyuridine 5'-triphosphate nucleotidohydrolase (150 aa).

Residues 69–71, Asn82, 86–88, and Lys96 each bind substrate; these read RSG and LID.

Belongs to the dUTPase family. The cofactor is Mg(2+).

It carries out the reaction dUTP + H2O = dUMP + diphosphate + H(+). Its pathway is pyrimidine metabolism; dUMP biosynthesis; dUMP from dCTP (dUTP route): step 2/2. This enzyme is involved in nucleotide metabolism: it produces dUMP, the immediate precursor of thymidine nucleotides and it decreases the intracellular concentration of dUTP so that uracil cannot be incorporated into DNA. In Neisseria gonorrhoeae (strain NCCP11945), this protein is Deoxyuridine 5'-triphosphate nucleotidohydrolase.